We begin with the raw amino-acid sequence, 375 residues long: Sperm microtubule associated protein 2 (375 aa).

Residues 1–78 (MGELGEHRAS…MAGEELPETS (78 aa)) are disordered. Positions 59–75 (EPEEEIPPEEMAGEELP) are enriched in acidic residues. THEG repeat units lie at residues 110 to 129 (AKGRKKRSRRLLELAKPKTN), 176 to 195 (TITVPVVSQRMEELSRPKRF), 214 to 233 (STLEYQASNRLKQLATPKVR), 250 to 269 (AAQMAVPTPRTLRLAKPRPP), 282 to 301 (PKPYVSDYNRLLQLATPKAL), 318 to 337 (VTKNAVASSRIISLAQPKIR), and 352 to 371 (ASLVAQASPRIYELATPKYI). Position 287 is a phosphoserine (Ser287).

As to quaternary structure, interacts with CCT5. In terms of tissue distribution, testis specific (at protein level). Specifically expressed in spermatids; Sertoli cells maintain the level of expression in spermatids. If isolated spermatids are cultivated for 16 hours alone, the expression of THEG is down-regulated. May require signals from Sertoli cells to initiate changes in its gene expression through spermatogenesis.

It localises to the nucleus. Functionally, may be involved (but not essential) in spermatogenesis. The sequence is that of Sperm microtubule associated protein 2 from Mus musculus (Mouse).